The chain runs to 520 residues: GMP synthase [glutamine-hydrolyzing] (520 aa).

The region spanning 13–205 (KIIVLDYGSQ…ALNICKAKGD (193 aa)) is the Glutamine amidotransferase type-1 domain. Catalysis depends on Cys90, which acts as the Nucleophile. Catalysis depends on residues His179 and Glu181. One can recognise a GMPS ATP-PPase domain in the interval 206–395 (WSMDNFIDMQ…LGMPDHIVWR (190 aa)). ATP is bound at residue 233 to 239 (SGGVDSS).

In terms of assembly, homodimer.

The catalysed reaction is XMP + L-glutamine + ATP + H2O = GMP + L-glutamate + AMP + diphosphate + 2 H(+). It functions in the pathway purine metabolism; GMP biosynthesis; GMP from XMP (L-Gln route): step 1/1. Functionally, catalyzes the synthesis of GMP from XMP. The chain is GMP synthase [glutamine-hydrolyzing] from Streptococcus pneumoniae (strain P1031).